The sequence spans 217 residues: Flagellin B1 (217 aa).

Residues 1–12 (MKVFEFLKGKRG) constitute a propeptide that is removed on maturation.

Belongs to the archaeal flagellin family.

It is found in the archaeal flagellum. In terms of biological role, flagellin is the subunit protein which polymerizes to form the filaments of archaeal flagella. This is Flagellin B1 (flaB1) from Methanocaldococcus jannaschii (strain ATCC 43067 / DSM 2661 / JAL-1 / JCM 10045 / NBRC 100440) (Methanococcus jannaschii).